Consider the following 120-residue polypeptide: UPF0102 protein Moth_0988 (120 aa).

Belongs to the UPF0102 family.

The chain is UPF0102 protein Moth_0988 from Moorella thermoacetica (strain ATCC 39073 / JCM 9320).